Here is a 208-residue protein sequence, read N- to C-terminus: Potassium-transporting ATPase KdpC subunit (208 aa).

A helical membrane pass occupies residues 6-26 (PALLVSIVLLVVCGLVYPLVL).

Belongs to the KdpC family. In terms of assembly, the system is composed of three essential subunits: KdpA, KdpB and KdpC.

Its subcellular location is the cell membrane. Functionally, part of the high-affinity ATP-driven potassium transport (or Kdp) system, which catalyzes the hydrolysis of ATP coupled with the electrogenic transport of potassium into the cytoplasm. This subunit acts as a catalytic chaperone that increases the ATP-binding affinity of the ATP-hydrolyzing subunit KdpB by the formation of a transient KdpB/KdpC/ATP ternary complex. The chain is Potassium-transporting ATPase KdpC subunit from Clostridioides difficile (strain 630) (Peptoclostridium difficile).